The chain runs to 299 residues: MFDENSNAAGTTPVASSLAATPNANLMSQVFNVKDSRWLQVEVCREFLRGQCARSDQECKFAHPPPNVDVQQGRVTACYDSIKGRCTRENPKCKYLHPPQHIKDQLLINGRNHLALKNLLSAQINQGGNQMINPMLALQQQAAAVNLLPNTQMYPQYYNGMMYQQVLPDPYAAAAQQLQTAALLGNVGGLLSAQSAAAALVANSSTQPPTPSPLLRLQRKRALEEDTSNGNDRTAAAHTQLLSLAAGAVPVKRPALDKNGAMLFSPAAPQTPQFNPYLLQTLQGYVPTVSCEYMQPPPF.

2 C3H1-type zinc fingers span residues 38-66 and 72-100; these read WLQVEVCREFLRGQCARSDQECKFAHPPP and QGRVTACYDSIKGRCTRENPKCKYLHPPQ.

The protein belongs to the muscleblind family.

It localises to the nucleus. Its function is as follows. Binds to RNA with repeat sequences CUG and CCUG. This chain is Muscleblind-like protein, found in Caenorhabditis briggsae.